A 292-amino-acid polypeptide reads, in one-letter code: uncharacterized protein (292 aa).

Residues 13 to 35 (LFILFIIVVCIYLLPRVAINAFY) form a helical membrane-spanning segment.

The protein belongs to the serine esterase family.

It is found in the membrane. This is an uncharacterized protein from Salmonella typhi.